Consider the following 561-residue polypeptide: Dihydroxy-acid dehydratase 2 (561 aa).

Cys-53 serves as a coordination point for [2Fe-2S] cluster. Position 85 (Asp-85) interacts with Mg(2+). Cys-126 lines the [2Fe-2S] cluster pocket. Residues Asp-127 and Lys-128 each contribute to the Mg(2+) site. An N6-carboxylysine modification is found at Lys-128. [2Fe-2S] cluster is bound at residue Cys-195. Residue Glu-446 participates in Mg(2+) binding. The Proton acceptor role is filled by Ser-472.

It belongs to the IlvD/Edd family. As to quaternary structure, homodimer. [2Fe-2S] cluster serves as cofactor. It depends on Mg(2+) as a cofactor.

The enzyme catalyses (2R)-2,3-dihydroxy-3-methylbutanoate = 3-methyl-2-oxobutanoate + H2O. It catalyses the reaction (2R,3R)-2,3-dihydroxy-3-methylpentanoate = (S)-3-methyl-2-oxopentanoate + H2O. The protein operates within amino-acid biosynthesis; L-isoleucine biosynthesis; L-isoleucine from 2-oxobutanoate: step 3/4. It functions in the pathway amino-acid biosynthesis; L-valine biosynthesis; L-valine from pyruvate: step 3/4. Its function is as follows. Functions in the biosynthesis of branched-chain amino acids. Catalyzes the dehydration of (2R,3R)-2,3-dihydroxy-3-methylpentanoate (2,3-dihydroxy-3-methylvalerate) into 2-oxo-3-methylpentanoate (2-oxo-3-methylvalerate) and of (2R)-2,3-dihydroxy-3-methylbutanoate (2,3-dihydroxyisovalerate) into 2-oxo-3-methylbutanoate (2-oxoisovalerate), the penultimate precursor to L-isoleucine and L-valine, respectively. The chain is Dihydroxy-acid dehydratase 2 from Acinetobacter baylyi (strain ATCC 33305 / BD413 / ADP1).